We begin with the raw amino-acid sequence, 181 residues long: Probable integrase/recombinase YoeC (181 aa).

The Tyr recombinase domain occupies 3-176 (IVQPIRSLEK…DEDTTRAAYK (174 aa)). Active-site residues include arginine 40, lysine 64, histidine 128, arginine 131, and histidine 154. Residue tyrosine 163 is the O-(3'-phospho-DNA)-tyrosine intermediate of the active site.

It belongs to the 'phage' integrase family.

This Bacillus subtilis (strain 168) protein is Probable integrase/recombinase YoeC (yoeC).